Here is a 323-residue protein sequence, read N- to C-terminus: Non-structural protein 9 (323 aa).

Positions 1-142 are disordered; the sequence is MFTSSAAKTG…GGSRPSQERG (142 aa). The span at 33 to 49 shows a compositional bias: low complexity; sequence IDGSISSGPISTGPDSD. Polar residues predominate over residues 99 to 115; sequence PNHTDIGTSLGQVTTKG.

Its subcellular location is the host cytoplasm. Constituent of viral factories. This is Non-structural protein 9 from Rice gall dwarf virus (RGDV).